We begin with the raw amino-acid sequence, 87 residues long: Beta-mammal toxin Css4 (87 aa).

An N-terminal signal peptide occupies residues 1-19 (MNSLLMITACLALVGTVWA). One can recognise an LCN-type CS-alpha/beta domain in the interval 20–85 (KEGYLVNSYT…VWPLPNKTCN (66 aa)). Intrachain disulfides connect cysteine 31/cysteine 84, cysteine 35/cysteine 60, cysteine 44/cysteine 65, and cysteine 48/cysteine 67. Position 85 is an asparagine amide (asparagine 85).

This sequence belongs to the long (4 C-C) scorpion toxin superfamily. Sodium channel inhibitor family. Beta subfamily. Expressed by the venom gland.

Its subcellular location is the secreted. Functionally, beta toxins bind voltage-independently at site-4 of sodium channels (Nav) and shift the voltage of activation toward more negative potentials thereby affecting sodium channel activation and promoting spontaneous and repetitive firing. This toxin is active only on mammals. The chain is Beta-mammal toxin Css4 from Centruroides suffusus (Durango bark scorpion).